Here is a 1101-residue protein sequence, read N- to C-terminus: Zinc finger SWIM domain-containing protein 4 (1101 aa).

A disordered region spans residues 1–29 (MEPPAAKRSRGCPAGDEPGTGARRSRPEP). Residues 134 to 171 (YHVSISFDRCKITSVSCGCDNRDLFYCAHVVALSLYRI) form an SWIM-type zinc finger.

In Mus musculus (Mouse), this protein is Zinc finger SWIM domain-containing protein 4 (Zswim4).